A 172-amino-acid polypeptide reads, in one-letter code: MAEKRNIFLVGPMGAGKSTIGRYLAQQLHMEFLDSDTVIEERTGADISWVFDVEGEEGFRKREEAVINDLTLEQGIVLATGGGSVKSRENRNRLSARGIVVYLETTIEKQLARTNRDKKRPLLQTDNPREVLESLAGERNPLYEEIADYTVRTDDQSAKVVANQIVKMLEES.

14-19 (GAGKST) is a binding site for ATP. S18 lines the Mg(2+) pocket. 3 residues coordinate substrate: D36, R60, and G82. R120 serves as a coordination point for ATP. R139 is a substrate binding site. Residue Q156 participates in ATP binding.

The protein belongs to the shikimate kinase family. Monomer. It depends on Mg(2+) as a cofactor.

The protein resides in the cytoplasm. It catalyses the reaction shikimate + ATP = 3-phosphoshikimate + ADP + H(+). Its pathway is metabolic intermediate biosynthesis; chorismate biosynthesis; chorismate from D-erythrose 4-phosphate and phosphoenolpyruvate: step 5/7. Catalyzes the specific phosphorylation of the 3-hydroxyl group of shikimic acid using ATP as a cosubstrate. The polypeptide is Shikimate kinase (Vibrio vulnificus (strain CMCP6)).